A 184-amino-acid chain; its full sequence is UPF0397 protein SAB2561c (184 aa).

5 consecutive transmembrane segments (helical) span residues 11-31, 44-64, 77-97, 111-131, and 148-168; these read VVAI…VVIP, AFLA…TGLV, AWWS…WIGL, MIYF…LIAP, and QGVI…TILL.

Belongs to the UPF0397 family.

The protein resides in the cell membrane. In Staphylococcus aureus (strain bovine RF122 / ET3-1), this protein is UPF0397 protein SAB2561c.